Here is a 126-residue protein sequence, read N- to C-terminus: Holo-[acyl-carrier-protein] synthase (126 aa).

The Mg(2+) site is built by Asp8 and Glu57.

This sequence belongs to the P-Pant transferase superfamily. AcpS family. Mg(2+) is required as a cofactor.

The protein resides in the cytoplasm. The enzyme catalyses apo-[ACP] + CoA = holo-[ACP] + adenosine 3',5'-bisphosphate + H(+). Its function is as follows. Transfers the 4'-phosphopantetheine moiety from coenzyme A to a Ser of acyl-carrier-protein. The polypeptide is Holo-[acyl-carrier-protein] synthase (Vibrio cholerae serotype O1 (strain ATCC 39315 / El Tor Inaba N16961)).